A 291-amino-acid polypeptide reads, in one-letter code: 4-hydroxy-tetrahydrodipicolinate synthase (291 aa).

T45 contributes to the pyruvate binding site. Catalysis depends on Y133, which acts as the Proton donor/acceptor. Residue K161 is the Schiff-base intermediate with substrate of the active site. I203 is a binding site for pyruvate.

Belongs to the DapA family. As to quaternary structure, homotetramer; dimer of dimers.

It is found in the cytoplasm. The catalysed reaction is L-aspartate 4-semialdehyde + pyruvate = (2S,4S)-4-hydroxy-2,3,4,5-tetrahydrodipicolinate + H2O + H(+). The protein operates within amino-acid biosynthesis; L-lysine biosynthesis via DAP pathway; (S)-tetrahydrodipicolinate from L-aspartate: step 3/4. In terms of biological role, catalyzes the condensation of (S)-aspartate-beta-semialdehyde [(S)-ASA] and pyruvate to 4-hydroxy-tetrahydrodipicolinate (HTPA). This is 4-hydroxy-tetrahydrodipicolinate synthase from Methylococcus capsulatus (strain ATCC 33009 / NCIMB 11132 / Bath).